The sequence spans 591 residues: Aspartate--tRNA ligase (591 aa).

E171 contributes to the L-aspartate binding site. The interval 195–198 (QLFK) is aspartate. Position 217 (R217) interacts with L-aspartate. Residues 217-219 (RDE) and Q226 each bind ATP. Position 448 (H448) interacts with L-aspartate. E482 is an ATP binding site. R489 provides a ligand contact to L-aspartate. 534 to 537 (GLDR) is an ATP binding site.

This sequence belongs to the class-II aminoacyl-tRNA synthetase family. Type 1 subfamily. In terms of assembly, homodimer.

It is found in the cytoplasm. It catalyses the reaction tRNA(Asp) + L-aspartate + ATP = L-aspartyl-tRNA(Asp) + AMP + diphosphate. Its function is as follows. Catalyzes the attachment of L-aspartate to tRNA(Asp) in a two-step reaction: L-aspartate is first activated by ATP to form Asp-AMP and then transferred to the acceptor end of tRNA(Asp). This Aliivibrio fischeri (strain MJ11) (Vibrio fischeri) protein is Aspartate--tRNA ligase.